A 135-amino-acid polypeptide reads, in one-letter code: Retinol-binding protein 1 (135 aa).

Position 9 is an omega-N-methylarginine (Trp9). The important for interaction with STRA6 stretch occupies residues 22 to 32 (RALDVNVALRK). Lys41, Met63, and Gln109 together coordinate all-trans-retinol.

Belongs to the calycin superfamily. Fatty-acid binding protein (FABP) family. In terms of assembly, interacts (only as retinol-free apoprotein) with STRA6. As to expression, detected in nearly all the tissues with higher expression in adult ovary, pancreas, pituitary gland and adrenal gland, and fetal liver.

The protein localises to the cytoplasm. The protein resides in the lipid droplet. Its function is as follows. Cytoplasmic retinol-binding protein. Accepts retinol from the transport protein STRA6, and thereby contributes to retinol uptake, storage and retinoid homeostasis. This Homo sapiens (Human) protein is Retinol-binding protein 1 (RBP1).